Consider the following 198-residue polypeptide: KinB-signaling pathway activation protein (198 aa).

Helical transmembrane passes span 9-29 (FFFS…FALK), 42-62 (AGQI…FSVI), 90-110 (LQLF…FLFF), 117-137 (LAGY…TAYI), 146-166 (TFVS…FPAL), and 173-193 (WLYL…LMLP).

The protein resides in the cell membrane. In terms of biological role, involved in the activation of the KinB signaling pathway of sporulation. The sequence is that of KinB-signaling pathway activation protein (kbaA) from Bacillus subtilis (strain 168).